The chain runs to 303 residues: Terpene synthase (303 aa).

The Mg(2+) site is built by Asp69 and Asp73. The DDXXD motif signature appears at Asp69–Asp73.

Belongs to the FPP/GGPP synthase family. Mg(2+) is required as a cofactor.

The catalysed reaction is (2E)-geranyl diphosphate + H2O = (2E)-geraniol + diphosphate. In terms of biological role, terpene synthase that is able to convert geraniol diphosphate to geraniol in tea leaves. The polypeptide is Terpene synthase (Matsumurasca onukii (Tea green leafhopper)).